The following is a 406-amino-acid chain: Probable 2,3-bisphosphoglycerate-independent phosphoglycerate mutase (406 aa).

It belongs to the BPG-independent phosphoglycerate mutase family. A-PGAM subfamily.

It catalyses the reaction (2R)-2-phosphoglycerate = (2R)-3-phosphoglycerate. It participates in carbohydrate degradation; glycolysis; pyruvate from D-glyceraldehyde 3-phosphate: step 3/5. Its function is as follows. Catalyzes the interconversion of 2-phosphoglycerate and 3-phosphoglycerate. The sequence is that of Probable 2,3-bisphosphoglycerate-independent phosphoglycerate mutase from Thermus thermophilus (strain ATCC 27634 / DSM 579 / HB8).